A 504-amino-acid polypeptide reads, in one-letter code: Maturase K (504 aa).

This sequence belongs to the intron maturase 2 family. MatK subfamily.

The protein localises to the plastid. Its subcellular location is the chloroplast. Usually encoded in the trnK tRNA gene intron. Probably assists in splicing its own and other chloroplast group II introns. The sequence is that of Maturase K from Rorippa amphibia (Great yellow-cress).